A 274-amino-acid chain; its full sequence is 2-dehydro-3-deoxyphosphooctonate aldolase (274 aa).

The protein belongs to the KdsA family.

It localises to the cytoplasm. The catalysed reaction is D-arabinose 5-phosphate + phosphoenolpyruvate + H2O = 3-deoxy-alpha-D-manno-2-octulosonate-8-phosphate + phosphate. It functions in the pathway carbohydrate biosynthesis; 3-deoxy-D-manno-octulosonate biosynthesis; 3-deoxy-D-manno-octulosonate from D-ribulose 5-phosphate: step 2/3. It participates in bacterial outer membrane biogenesis; lipopolysaccharide biosynthesis. The polypeptide is 2-dehydro-3-deoxyphosphooctonate aldolase (Rickettsia canadensis (strain McKiel)).